A 291-amino-acid chain; its full sequence is START domain-containing protein 10 (291 aa).

Methionine 1 bears the N-acetylmethionine mark. Residues 1–23 (MEKPAASTEPQGSRPALGRESVQ) are disordered. Positions 14 to 224 (RPALGRESVQ…MYKACIKYPE (211 aa)) constitute an START domain. N6-succinyllysine occurs at positions 94, 197, and 202. Phosphoserine is present on residues serine 253, serine 259, serine 284, and serine 289. A disordered region spans residues 260–291 (LENIDESAVTESREERAGGAGGEGSDDDTSLT).

Phosphorylation at Ser-284 by CK2 negatively regulates lipid transfer activity, possibly by decreasing membrane association. As to expression, testis, kidney, liver, and intestine with the highest level in the testis.

It localises to the cell projection. It is found in the cilium. The protein resides in the flagellum. Its subcellular location is the cytoplasm. The protein localises to the membrane. Its function is as follows. Phospholipid transfer protein that preferentially selects lipid species containing a palmitoyl or stearoyl chain on the sn-1 and an unsaturated fatty acyl chain (18:1 or 18:2) on the sn-2 position. Able to transfer phosphatidylcholine (PC) and phosphatidyetanolamline (PE) between membranes. May play metabolic roles in sperm maturation or fertilization. This is START domain-containing protein 10 (Stard10) from Mus musculus (Mouse).